Reading from the N-terminus, the 356-residue chain is Histidinol-phosphate aminotransferase 2 (356 aa).

K217 carries the post-translational modification N6-(pyridoxal phosphate)lysine.

This sequence belongs to the class-II pyridoxal-phosphate-dependent aminotransferase family. Histidinol-phosphate aminotransferase subfamily. Homodimer. Requires pyridoxal 5'-phosphate as cofactor.

It catalyses the reaction L-histidinol phosphate + 2-oxoglutarate = 3-(imidazol-4-yl)-2-oxopropyl phosphate + L-glutamate. Its pathway is amino-acid biosynthesis; L-histidine biosynthesis; L-histidine from 5-phospho-alpha-D-ribose 1-diphosphate: step 7/9. This chain is Histidinol-phosphate aminotransferase 2, found in Burkholderia pseudomallei (strain 1710b).